The following is a 400-amino-acid chain: Pyruvate dehydrogenase E1 component subunit beta-4, chloroplastic (400 aa).

The disordered stretch occupies residues 1-34 (MAAASSLHAAPRVGSSSSFSSSSSAGRRSASAAR). The transit peptide at 1-57 (MAAASSLHAAPRVGSSSSFSSSSSAGRRSASAARSVRVAAAAGSCAARRAGGRMVAR) directs the protein to the chloroplast. Residues 9-34 (AAPRVGSSSSFSSSSSAGRRSASAAR) show a composition bias toward low complexity. Glu136 serves as a coordination point for thiamine diphosphate. 4 residues coordinate K(+): Ile189, Ala237, Ile238, and Asn242.

As to quaternary structure, tetramer of 2 alpha and 2 beta subunits. Thiamine diphosphate is required as a cofactor.

It is found in the plastid. It localises to the chloroplast. The catalysed reaction is N(6)-[(R)-lipoyl]-L-lysyl-[protein] + pyruvate + H(+) = N(6)-[(R)-S(8)-acetyldihydrolipoyl]-L-lysyl-[protein] + CO2. In terms of biological role, the pyruvate dehydrogenase complex catalyzes the overall conversion of pyruvate to acetyl-CoA and CO(2). It contains multiple copies of three enzymatic components: pyruvate dehydrogenase (E1), dihydrolipoamide acetyltransferase (E2) and lipoamide dehydrogenase (E3). The protein is Pyruvate dehydrogenase E1 component subunit beta-4, chloroplastic of Oryza sativa subsp. japonica (Rice).